The following is a 176-amino-acid chain: MRLIDPDADLEFDPDSVYDGPSKSQKKREVEALQDLGNELVKLPDAQFKRIELPEELREAVAACRKITQNSALRRQRQYIGKLMRGIDPAPIQAQLDAFKGVSATENAKLHQAEKWRDRLIADNEALTIFLDSYPETDATRLRQLIRNARDEAARNKPPKAFREIFRVIREAMQAG.

Over residues 1–16 (MRLIDPDADLEFDPDS) the composition is skewed to acidic residues. The disordered stretch occupies residues 1–29 (MRLIDPDADLEFDPDSVYDGPSKSQKKRE).

The protein belongs to the DarP family.

The protein resides in the cytoplasm. Functionally, member of a network of 50S ribosomal subunit biogenesis factors which assembles along the 30S-50S interface, preventing incorrect 23S rRNA structures from forming. Promotes peptidyl transferase center (PTC) maturation. This is Dual-action ribosomal maturation protein DarP from Thiobacillus denitrificans (strain ATCC 25259 / T1).